A 199-amino-acid polypeptide reads, in one-letter code: Cytochrome b (199 aa).

Transmembrane regions (helical) follow at residues 1–8 (LTGLFLAM), 32–53 (WLIR…YFHI), 68–88 (WNIG…GYVL), and 133–153 (FFAF…LHLL). 2 residues coordinate heme b: His38 and His52. Heme b is bound by residues His137 and His151. His156 is a binding site for a ubiquinone. A helical transmembrane segment spans residues 181 to 199 (YKDLLGFAILLVALASLAH).

Belongs to the cytochrome b family. As to quaternary structure, the cytochrome bc1 complex contains 3 respiratory subunits (MT-CYB, CYC1 and UQCRFS1), 2 core proteins (UQCRC1 and UQCRC2) and probably 6 low-molecular weight proteins. Requires heme b as cofactor.

The protein resides in the mitochondrion inner membrane. Its function is as follows. Component of the ubiquinol-cytochrome c reductase complex (complex III or cytochrome b-c1 complex) that is part of the mitochondrial respiratory chain. The b-c1 complex mediates electron transfer from ubiquinol to cytochrome c. Contributes to the generation of a proton gradient across the mitochondrial membrane that is then used for ATP synthesis. This is Cytochrome b (mt-cyb) from Sarda chiliensis (Pacific bonito).